The primary structure comprises 291 residues: Quinol oxidase subunit 2 (291 aa).

Positions 1–28 are cleaved as a signal peptide; the sequence is MQLKKAFWKLASLLPXSLLLFLGGCDKK. Helical transmembrane passes span 49 to 69 and 91 to 111; these read SFLL…VILI and LEII…IPTV.

Belongs to the cytochrome c oxidase subunit 2 family.

It is found in the cell membrane. The enzyme catalyses 2 a quinol + O2 = 2 a quinone + 2 H2O. Functionally, catalyzes quinol oxidation with the concomitant reduction of oxygen to water. Subunit II transfers the electrons from a quinol to the binuclear center of the catalytic subunit I. This Bacillus cereus (strain ATCC 10987 / NRS 248) protein is Quinol oxidase subunit 2.